Here is a 322-residue protein sequence, read N- to C-terminus: MNCNYLWKSSALLKNLHRRAKIIFEIRNYFFNLGILEVETPILSNYSVTDVNFIPFKTKLQITKKRMWLVPSPEYHMKRLLVQNIGAIYQISRSFRNNEFGGPYHNPEFTMLEWYSPYCNMFDFMKKVEKFLVFCLKVVQVKYISYQRAFIKYLNIDPLLAKKRELLDLINKFKFNHLISDCDSISTLLEILFTLKIEPNLNNKKLIFVYHYPADQAILAAINDNDSRVSDRFEVFFKGVELGNGFYELTDQAEHIRRFKLNNIQRRHKGICSVEVDQFFLKSLSRGLPPCSGIAIGLDRLIMLSLNLKTINEVIAFPIERC.

72–74 (SPE) is a substrate binding site. Residues 96 to 98 (RNN) and asparagine 106 contribute to the ATP site. Substrate is bound at residue tyrosine 115. An ATP-binding site is contributed by 241–242 (EL). Glutamate 248 provides a ligand contact to substrate. Residue glycine 297 coordinates ATP.

It belongs to the class-II aminoacyl-tRNA synthetase family. EpmA subfamily. As to quaternary structure, homodimer.

It carries out the reaction D-beta-lysine + L-lysyl-[protein] + ATP = N(6)-((3R)-3,6-diaminohexanoyl)-L-lysyl-[protein] + AMP + diphosphate + H(+). Functionally, with EpmB is involved in the beta-lysylation step of the post-translational modification of translation elongation factor P (EF-P). Catalyzes the ATP-dependent activation of (R)-beta-lysine produced by EpmB, forming a lysyl-adenylate, from which the beta-lysyl moiety is then transferred to the epsilon-amino group of a conserved specific lysine residue in EF-P. This is Elongation factor P--(R)-beta-lysine ligase from Buchnera aphidicola subsp. Baizongia pistaciae (strain Bp).